The chain runs to 215 residues: Thiamine-phosphate synthase (215 aa).

Residues 42 to 46 (QYREK) and D77 each bind 4-amino-2-methyl-5-(diphosphooxymethyl)pyrimidine. Positions 78 and 97 each coordinate Mg(2+). Residue S116 coordinates 4-amino-2-methyl-5-(diphosphooxymethyl)pyrimidine. A 2-[(2R,5Z)-2-carboxy-4-methylthiazol-5(2H)-ylidene]ethyl phosphate-binding site is contributed by 143-145 (TKS). K146 contributes to the 4-amino-2-methyl-5-(diphosphooxymethyl)pyrimidine binding site. 2-[(2R,5Z)-2-carboxy-4-methylthiazol-5(2H)-ylidene]ethyl phosphate contacts are provided by residues G174 and 194-195 (IS).

It belongs to the thiamine-phosphate synthase family. Mg(2+) is required as a cofactor.

It catalyses the reaction 2-[(2R,5Z)-2-carboxy-4-methylthiazol-5(2H)-ylidene]ethyl phosphate + 4-amino-2-methyl-5-(diphosphooxymethyl)pyrimidine + 2 H(+) = thiamine phosphate + CO2 + diphosphate. It carries out the reaction 2-(2-carboxy-4-methylthiazol-5-yl)ethyl phosphate + 4-amino-2-methyl-5-(diphosphooxymethyl)pyrimidine + 2 H(+) = thiamine phosphate + CO2 + diphosphate. The enzyme catalyses 4-methyl-5-(2-phosphooxyethyl)-thiazole + 4-amino-2-methyl-5-(diphosphooxymethyl)pyrimidine + H(+) = thiamine phosphate + diphosphate. Its pathway is cofactor biosynthesis; thiamine diphosphate biosynthesis; thiamine phosphate from 4-amino-2-methyl-5-diphosphomethylpyrimidine and 4-methyl-5-(2-phosphoethyl)-thiazole: step 1/1. Functionally, condenses 4-methyl-5-(beta-hydroxyethyl)thiazole monophosphate (THZ-P) and 2-methyl-4-amino-5-hydroxymethyl pyrimidine pyrophosphate (HMP-PP) to form thiamine monophosphate (TMP). This Limosilactobacillus reuteri (strain DSM 20016) (Lactobacillus reuteri) protein is Thiamine-phosphate synthase.